Consider the following 205-residue polypeptide: Outer-membrane lipoprotein carrier protein (205 aa).

The first 22 residues, 1–22 (MKKIVIVISILLTSFLSSAVSA), serve as a signal peptide directing secretion.

Belongs to the LolA family. Monomer.

It is found in the periplasm. Functionally, participates in the translocation of lipoproteins from the inner membrane to the outer membrane. Only forms a complex with a lipoprotein if the residue after the N-terminal Cys is not an aspartate (The Asp acts as a targeting signal to indicate that the lipoprotein should stay in the inner membrane). The chain is Outer-membrane lipoprotein carrier protein from Psychromonas ingrahamii (strain DSM 17664 / CCUG 51855 / 37).